A 183-amino-acid chain; its full sequence is NAD(P)H-quinone oxidoreductase subunit I, chloroplastic (183 aa).

4Fe-4S ferredoxin-type domains lie at 55-84 and 95-124; these read GRIH…VDWK and KSYS…MTEE. Positions 64, 67, 70, 74, 104, 107, 110, and 114 each coordinate [4Fe-4S] cluster.

This sequence belongs to the complex I 23 kDa subunit family. As to quaternary structure, NDH is composed of at least 16 different subunits, 5 of which are encoded in the nucleus. The cofactor is [4Fe-4S] cluster.

The protein resides in the plastid. It is found in the chloroplast thylakoid membrane. It carries out the reaction a plastoquinone + NADH + (n+1) H(+)(in) = a plastoquinol + NAD(+) + n H(+)(out). The catalysed reaction is a plastoquinone + NADPH + (n+1) H(+)(in) = a plastoquinol + NADP(+) + n H(+)(out). Functionally, NDH shuttles electrons from NAD(P)H:plastoquinone, via FMN and iron-sulfur (Fe-S) centers, to quinones in the photosynthetic chain and possibly in a chloroplast respiratory chain. The immediate electron acceptor for the enzyme in this species is believed to be plastoquinone. Couples the redox reaction to proton translocation, and thus conserves the redox energy in a proton gradient. This Anthoceros angustus (Hornwort) protein is NAD(P)H-quinone oxidoreductase subunit I, chloroplastic.